Consider the following 344-residue polypeptide: Heat-inducible transcription repressor HrcA (344 aa).

It belongs to the HrcA family.

Functionally, negative regulator of class I heat shock genes (grpE-dnaK-dnaJ and groELS operons). Prevents heat-shock induction of these operons. The chain is Heat-inducible transcription repressor HrcA from Streptococcus agalactiae serotype Ia (strain ATCC 27591 / A909 / CDC SS700).